We begin with the raw amino-acid sequence, 434 residues long: E3 ubiquitin-protein transferase MAEA (434 aa).

The interval 1 to 124 (MAVQESAAQL…AAASVWKRKR (124 aa)) is extracellular and involved in cell to cell contact. Thr28 is modified (phosphothreonine). Residues 121 to 153 (KRKRMDRMMVEHLLRCGYYNTAVKLARQSGIED) form the LisH domain. The region spanning 159-254 (MFLTAKEVEE…ELIRQNKRLD (96 aa)) is the CTLH domain. A disordered region spans residues 190 to 222 (RKMKGRQSEHDAKTGRKSRVASGSPKESEDLGM). The RING-Gid-type zinc finger occupies 352 to 419 (CPVCSRSLNK…QDDKVVCPRT (68 aa)).

In terms of assembly, identified in the CTLH complex that contains GID4, RANBP9 and/or RANBP10, MKLN1, MAEA, RMND5A (or alternatively its paralog RMND5B), GID8, ARMC8, WDR26 and YPEL5. Within this complex, MAEA, RMND5A (or alternatively its paralog RMND5B), GID8, WDR26, and RANBP9 and/or RANBP10 form the catalytic core, while GID4, MKLN1, ARMC8 and YPEL5 have ancillary roles. Interacts with F-actin. Post-translationally, autoubiquitinated as component of the CTLH E3 ubiquitin-protein ligase complex (in vitro).

It is found in the cytoplasm. The protein localises to the nucleus. Its subcellular location is the nucleoplasm. The protein resides in the nucleus matrix. It localises to the cell membrane. It is found in the cytoskeleton. The catalysed reaction is S-ubiquitinyl-[E2 ubiquitin-conjugating enzyme]-L-cysteine + [acceptor protein]-L-lysine = [E2 ubiquitin-conjugating enzyme]-L-cysteine + N(6)-ubiquitinyl-[acceptor protein]-L-lysine.. Core component of the CTLH E3 ubiquitin-protein ligase complex that selectively accepts ubiquitin from UBE2H and mediates ubiquitination and subsequent proteasomal degradation of the transcription factor HBP1. MAEA and RMND5A are both required for catalytic activity of the CTLH E3 ubiquitin-protein ligase complex. MAEA is required for normal cell proliferation. The CTLH E3 ubiquitin-protein ligase complex is not required for the degradation of enzymes involved in gluconeogenesis, such as FBP1. Plays a role in erythroblast enucleation during erythrocyte maturation and in the development of mature macrophages. Mediates the attachment of erythroid cell to mature macrophages; this MAEA-mediated contact inhibits erythroid cell apoptosis. Participates in erythroblastic island formation, which is the functional unit of definitive erythropoiesis. Associates with F-actin to regulate actin distribution in erythroblasts and macrophages. May contribute to nuclear architecture and cells division events. The protein is E3 ubiquitin-protein transferase MAEA (MAEA) of Bos taurus (Bovine).